We begin with the raw amino-acid sequence, 271 residues long: Ribosomal RNA small subunit methyltransferase A (271 aa).

S-adenosyl-L-methionine is bound by residues H11, L13, G38, E58, D86, and N101.

This sequence belongs to the class I-like SAM-binding methyltransferase superfamily. rRNA adenine N(6)-methyltransferase family. RsmA subfamily.

The protein resides in the cytoplasm. The catalysed reaction is adenosine(1518)/adenosine(1519) in 16S rRNA + 4 S-adenosyl-L-methionine = N(6)-dimethyladenosine(1518)/N(6)-dimethyladenosine(1519) in 16S rRNA + 4 S-adenosyl-L-homocysteine + 4 H(+). Specifically dimethylates two adjacent adenosines (A1518 and A1519) in the loop of a conserved hairpin near the 3'-end of 16S rRNA in the 30S particle. May play a critical role in biogenesis of 30S subunits. The polypeptide is Ribosomal RNA small subunit methyltransferase A (Helicobacter pylori (strain P12)).